Reading from the N-terminus, the 291-residue chain is UPF0173 metal-dependent hydrolase Rmet_5695 (291 aa).

The protein belongs to the UPF0173 family.

This chain is UPF0173 metal-dependent hydrolase Rmet_5695, found in Cupriavidus metallidurans (strain ATCC 43123 / DSM 2839 / NBRC 102507 / CH34) (Ralstonia metallidurans).